Reading from the N-terminus, the 413-residue chain is E3 ubiquitin-protein ligase makorin (413 aa).

2 consecutive C3H1-type zinc fingers follow at residues 2 to 29 and 30 to 57; these read PRHE…HDVA and TRNE…HTRP. The tract at residues 61–85 is disordered; it reads ELPSCSTPQTSQNQQNLQNSGQRVR. The span at 66–82 shows a compositional bias: low complexity; it reads STPQTSQNQQNLQNSGQ. The C3H1-type 3 zinc-finger motif lies at 138 to 167; it reads QAQLMMCPYHQKSGDCNRQDMDCPFAHGNY. Residues 213–267 form an RING-type zinc finger; the sequence is CGICMENIFEKNLRFGILNGCQHCFCLDCIRQWRSKDQENVELATKTVRSCPECR. Residues 296-327 form a C3H1-type 4 zinc finger; it reads NTKRKICKYYSNERSRGACPFGNKCFYKHQLP.

In terms of assembly, component of a complex at least containing lep-2, lin-28 and the long non-coding RNA lep-5, which mediates the degradation of lin-28. As to expression, expressed in seam, tail tip, and other hypodermal cells, head and tail neurons, the pharynx, intestine and the developing hermaphrodite somatic gonad. Not expressed in body wall muscle cells.

Its subcellular location is the cytoplasm. It carries out the reaction S-ubiquitinyl-[E2 ubiquitin-conjugating enzyme]-L-cysteine + [acceptor protein]-L-lysine = [E2 ubiquitin-conjugating enzyme]-L-cysteine + N(6)-ubiquitinyl-[acceptor protein]-L-lysine.. Its pathway is protein modification; protein ubiquitination. In terms of biological role, E3 ubiquitin ligase which catalyzes the covalent attachment of ubiquitin moieties onto substrate proteins. Promotes the larval to adult transition by binding to the long non-coding RNA lep-5 to target the heterochronic protein lin-28 for degradation by the proteasome. This association and degradation of lin-28 also controls the timing of the sexual differentiation of individual neurons in males including the AIM, AWA, ADF, ASJ and CEM neurons. Plays a role in governing the developmental timing of male tail tip morphogenesis. Plays a role in two aspects of male mating behavior: response to hermaphrodite contact and vulva location. May play a role in the detection of preferred food sources. This is E3 ubiquitin-protein ligase makorin from Caenorhabditis elegans.